A 267-amino-acid polypeptide reads, in one-letter code: Diphthine--ammonia ligase (267 aa).

Tyr-97 bears the Phosphotyrosine mark.

This sequence belongs to the Diphthine--ammonia ligase family.

It catalyses the reaction diphthine-[translation elongation factor 2] + NH4(+) + ATP = diphthamide-[translation elongation factor 2] + AMP + diphosphate + H(+). Its pathway is protein modification; peptidyl-diphthamide biosynthesis. Its function is as follows. Amidase that catalyzes the last step of diphthamide biosynthesis using ammonium and ATP. Diphthamide biosynthesis consists in the conversion of an L-histidine residue in the translation elongation factor eEF-2 (EEF2) to diphthamide. The polypeptide is Diphthine--ammonia ligase (Dph6) (Rattus norvegicus (Rat)).